The chain runs to 188 residues: Elongation factor P (188 aa).

It belongs to the elongation factor P family.

It is found in the cytoplasm. It participates in protein biosynthesis; polypeptide chain elongation. Functionally, involved in peptide bond synthesis. Stimulates efficient translation and peptide-bond synthesis on native or reconstituted 70S ribosomes in vitro. Probably functions indirectly by altering the affinity of the ribosome for aminoacyl-tRNA, thus increasing their reactivity as acceptors for peptidyl transferase. This is Elongation factor P from Natranaerobius thermophilus (strain ATCC BAA-1301 / DSM 18059 / JW/NM-WN-LF).